A 211-amino-acid polypeptide reads, in one-letter code: Protein TMA23 (211 aa).

The tract at residues 115 to 211 (ASFVVSSASS…SARRDRKEHI (97 aa)) is disordered. The span at 116–125 (SFVVSSASSS) shows a compositional bias: low complexity. 3 stretches are compositionally biased toward basic residues: residues 140–149 (VKRKKLKKDK), 158–176 (KKKKKKKSKKESKKGKKSK), and 185–197 (SKHKKSKKSKKHK). Positions 198-211 (KEESSARRDRKEHI) are enriched in basic and acidic residues.

Forms homooligomers. Associates with ribosomal complexes.

The protein localises to the nucleus. It is found in the nucleolus. Functionally, trans-acting factors of the ribosome biogenesis process. The sequence is that of Protein TMA23 (TMA23) from Saccharomyces cerevisiae (strain ATCC 204508 / S288c) (Baker's yeast).